A 95-amino-acid chain; its full sequence is Cell division protein FtsB (95 aa).

Over 1–3 (MRW) the chain is Cytoplasmic. Residues 4 to 21 (VLAGLTALLLWLQGLLWF) form a helical membrane-spanning segment. The Periplasmic segment spans residues 22–95 (GEGGLNDVRG…QIIEREDDAR (74 aa)). A coiled-coil region spans residues 26 to 76 (LNDVRGLSRSVEAQREEVDRLRQRNQALEAEVNDLKTGLEALEERARSELG).

Belongs to the FtsB family. As to quaternary structure, part of a complex composed of FtsB, FtsL and FtsQ.

The protein localises to the cell inner membrane. Functionally, essential cell division protein. May link together the upstream cell division proteins, which are predominantly cytoplasmic, with the downstream cell division proteins, which are predominantly periplasmic. This Alkalilimnicola ehrlichii (strain ATCC BAA-1101 / DSM 17681 / MLHE-1) protein is Cell division protein FtsB.